The sequence spans 244 residues: Sperm-egg fusion protein Juno (244 aa).

Positions 1-19 (MAQWWLILLGLWTVLPSLA) are cleaved as a signal peptide. 8 disulfides stabilise this stretch: C27/C55, C47/C95, C56/C99, C79/C166, C86/C137, C126/C200, C130/C180, and C143/C160. The tract at residues 62-81 (WEAHLDEPLLFNFSMTHCGL) is important for interaction with IZUMO1. N73 carries an N-linked (GlcNAc...) asparagine glycan. Residues 223-244 (SASAPQLSYSITAFSLCLLLHA) constitute a propeptide that is removed on maturation.

This sequence belongs to the folate receptor family. In terms of assembly, monomer. Interacts with IZUMO1; the interaction is direct. IZUMO1 and IZUMO1R/JUNO form a complex with 1:1 stoichiometry. Interacts with FCRL3/MAIA; FCRL3/MAIA replaces IZUMO1R/JUNO as IZUMO1 receptor after sperm-egg adhesion, thereby permitting species-specific gamete fusion. Interacts with WDR54. Post-translationally, the protein is rapidly cleaved following fertilization, being only weakly detectable in zona-intact fertilized eggs at telophase II and undetectable at the pronuclear stage. Sheding is probably required to block to polyspermy and ensuring egg fusion with a single sperm. Expressed in the oocyte (at protein level).

Its subcellular location is the cell membrane. It localises to the cell projection. The protein resides in the microvillus membrane. In terms of biological role, receptor for IZUMO1 present at the cell surface of oocytes (oolemma), which is essential for species-specific gamete recognition and fertilization. The IZUMO1:IZUMO1R/JUNO interaction is a necessary adhesion event between sperm and egg that is required for fertilization but is not sufficient for cell fusion. The ligand-receptor interaction probably does not act as a membrane 'fusogen'. Does not bind folate. The chain is Sperm-egg fusion protein Juno (Izumo1r) from Rattus norvegicus (Rat).